The chain runs to 326 residues: Aquaporin-4 (326 aa).

At Met1–Lys39 the chain is on the cytoplasmic side. S-palmitoyl cysteine attachment occurs at residues Cys15 and Cys20. A helical membrane pass occupies residues Ala40–Ile60. Over Asn61–Asp72 the chain is Extracellular. The helical transmembrane segment at Met73–Gly92 threads the bilayer. At His93–Gly96 the chain is on the cytoplasmic side. Positions Gly97 to Thr104 form an intramembrane region, discontinuously helical. Residues Asn100–Ala102 carry the NPA 1 motif. The Cytoplasmic portion of the chain corresponds to Val105–Ser118. Phosphoserine; by PKG is present on Ser114. Residues Val119–Val139 form a helical membrane-spanning segment. The Extracellular portion of the chain corresponds to Thr140–Thr158. A glycan (N-linked (GlcNAc...) asparagine) is linked at Asn156. A helical transmembrane segment spans residues Ala159–Ala179. Topologically, residues Ser180–Asp187 are cytoplasmic. Ser183 is subject to Phosphoserine; by PKC. Residues Val188 to Ile208 form a helical membrane-spanning segment. Asn209 carries N-linked (GlcNAc...) asparagine glycosylation. Topologically, residues Asn209 to Thr211 are extracellular. An intramembrane region (discontinuously helical) is located at residues Gly212–Val225. The NPA 2 motif lies at Asn216–Ala218. Over Ile226–Trp234 the chain is Extracellular. The helical transmembrane segment at Ile235–Phe255 threads the bilayer. At Cys256–Val326 the chain is on the cytoplasmic side. Phosphoserine is present on residues Ser279 and Ser288. At Thr292 the chain carries Phosphothreonine. Residue Ser324 is modified to Phosphoserine.

The protein belongs to the MIP/aquaporin (TC 1.A.8) family. As to quaternary structure, homotetramer. The tetramers can form oligomeric arrays in membranes. The size of the oligomers differs between tissues and is smaller in skeletal muscle than in brain. Interaction between AQP4 oligomeric arrays in close-by cells can contribute to cell-cell adhesion. Part of a complex containing MLC1, TRPV4, HEPACAM and ATP1B1. Phosphorylation by PKC at Ser-183 reduces conductance by 50%. Phosphorylation by PKG at Ser-114 in response to glutamate increases conductance by 40%. Post-translationally, isoform Long: Palmitoylated on its N-terminal region.

It localises to the cell membrane. It is found in the basolateral cell membrane. The protein resides in the endosome membrane. Its subcellular location is the sarcolemma. The protein localises to the cell projection. The enzyme catalyses H2O(in) = H2O(out). Forms a water-specific channel. Plays an important role in brain water homeostasis and in glymphatic solute transport. Required for a normal rate of water exchange across the blood brain interface. Required for normal levels of cerebrospinal fluid influx into the brain cortex and parenchyma along paravascular spaces that surround penetrating arteries, and for normal drainage of interstitial fluid along paravenous drainage pathways. Thereby, it is required for normal clearance of solutes from the brain interstitial fluid, including soluble beta-amyloid peptides derived from APP. Plays a redundant role in urinary water homeostasis and urinary concentrating ability. The protein is Aquaporin-4 (AQP4) of Notomys alexis (Spinifex hopping mouse).